The sequence spans 167 residues: Seroin (167 aa).

Residues 1–17 form the signal peptide; it reads MATKILIFLSFVALSSA. N-linked (GlcNAc...) asparagine glycosylation is present at Asn-26. A run of 5 repeats spans residues 38–46, 56–64, 76–78, 79–81, and 82–84. The interval 145 to 167 is disordered; it reads VNETIVGDNPPKFEESRKESSSN. N-linked (GlcNAc...) asparagine glycosylation occurs at Asn-146. Over residues 155-167 the composition is skewed to basic and acidic residues; that stretch reads PKFEESRKESSSN.

In terms of tissue distribution, produced by both the posterior (PSG) and middle (MSG) sections of silk glands.

It localises to the secreted. In Galleria mellonella (Greater wax moth), this protein is Seroin.